A 116-amino-acid chain; its full sequence is Host cell factor C1 regulator 1 (116 aa).

The tract at residues 1-22 is disordered; the sequence is MILQQPLERGPPGRDPRATTGV. The interval 54 to 57 is interaction with HCFC1; that stretch reads DHPY. Positions 88 to 97 match the Nuclear export signal motif; that stretch reads IPEALRLLRL.

In terms of assembly, interacts with HCFC1.

The protein localises to the cytoplasm. The protein resides in the nucleus. Functionally, regulates HCFC1 activity by modulating its subcellular localization. Overexpression of HCFC1R1 leads to accumulation of HCFC1 in the cytoplasm. HCFC1R1-mediated export may provide the pool of cytoplasmic HCFC1 required for import of virion-derived VP16 into the nucleus. This Rattus norvegicus (Rat) protein is Host cell factor C1 regulator 1 (Hcfc1r1).